The chain runs to 586 residues: Transcription elongation regulator 1-like protein (586 aa).

The segment at 1–30 is disordered; that stretch reads MQAGARFQRRRRQLQQQQPRRRQPLLWPMD. A compositionally biased stretch (basic residues) spans 7–23; the sequence is FQRRRRQLQQQQPRRRQ. The 34-residue stretch at 148-181 folds into the WW 1 domain; the sequence is TPIGKSWIDKRIPNCKIFFNNSFALDSTWIHPEE. Disordered regions lie at residues 281 to 344 and 378 to 448; these read TSPV…PGSP and DLNR…QILL. The segment covering 306 to 317 has biased composition (basic and acidic residues); it reads KSRDGDKEDKEP. The region spanning 339–372 is the WW 2 domain; the sequence is PVPGSPWCVVWTGDDRVFFFNPTMHLSVWEKPMD. Composition is skewed to basic and acidic residues over residues 378–387, 411–421, and 428–439; these read DLNRIIEDPP, DQDVKTKRNRT, and KPEEAKREDKGT. FF domains lie at 450–503 and 515–570; these read LEER…FVKT and KLLL…FILI.

The protein is Transcription elongation regulator 1-like protein (TCERG1L) of Homo sapiens (Human).